A 145-amino-acid polypeptide reads, in one-letter code: Deoxyuridine 5'-triphosphate nucleotidohydrolase (145 aa).

Substrate-binding positions include 62-64, N75, 79-81, and K89; these read RSG and TVD.

This sequence belongs to the dUTPase family. Mg(2+) is required as a cofactor.

It carries out the reaction dUTP + H2O = dUMP + diphosphate + H(+). It participates in pyrimidine metabolism; dUMP biosynthesis; dUMP from dCTP (dUTP route): step 2/2. Functionally, this enzyme is involved in nucleotide metabolism: it produces dUMP, the immediate precursor of thymidine nucleotides and it decreases the intracellular concentration of dUTP so that uracil cannot be incorporated into DNA. The chain is Deoxyuridine 5'-triphosphate nucleotidohydrolase from Helicobacter pylori (strain ATCC 700392 / 26695) (Campylobacter pylori).